We begin with the raw amino-acid sequence, 442 residues long: Tyrosine--tRNA ligase (442 aa).

Tyr-55 is an L-tyrosine binding site. The short motif at Pro-60 to Asn-69 is the 'HIGH' region element. 2 residues coordinate L-tyrosine: Tyr-190 and Gln-194. Positions Lys-250–Ser-254 match the 'KMSKS' region motif. Lys-253 lines the ATP pocket. An S4 RNA-binding domain is found at Val-373–Val-438.

The protein belongs to the class-I aminoacyl-tRNA synthetase family. TyrS type 1 subfamily. Homodimer.

It is found in the cytoplasm. It carries out the reaction tRNA(Tyr) + L-tyrosine + ATP = L-tyrosyl-tRNA(Tyr) + AMP + diphosphate + H(+). Its function is as follows. Catalyzes the attachment of tyrosine to tRNA(Tyr) in a two-step reaction: tyrosine is first activated by ATP to form Tyr-AMP and then transferred to the acceptor end of tRNA(Tyr). This chain is Tyrosine--tRNA ligase, found in Leifsonia xyli subsp. xyli (strain CTCB07).